The following is a 1392-amino-acid chain: ATP-dependent helicase/nuclease subunit A (1392 aa).

Residues 3 to 489 enclose the UvrD-like helicase ATP-binding domain; sequence NPKWTPAQQA…IDLNQNFRSR (487 aa). 24 to 31 serves as a coordination point for ATP; sequence AAAGSGKT. Disordered stretches follow at residues 291-319, 555-594, and 1051-1126; these read RGSK…KARD, KRGA…LEEA, and GPVQ…LDTK. 2 stretches are compositionally biased toward basic and acidic residues: residues 305–319 and 567–583; these read ENSK…KARD and SPAK…REPE. A UvrD-like helicase C-terminal domain is found at 556–886; the sequence is RGAEDAATEV…RFITVHSSKG (331 aa). Positions 584–594 are enriched in acidic residues; it reads SGDDESSLEEA. Residues 1088–1113 are compositionally biased toward basic and acidic residues; that stretch reads ASGKTEIPGETKNSEETKTSEDKKNL.

This sequence belongs to the helicase family. AddA subfamily. As to quaternary structure, heterodimer of AddA and AddB/RexB. Requires Mg(2+) as cofactor.

It catalyses the reaction Couples ATP hydrolysis with the unwinding of duplex DNA by translocating in the 3'-5' direction.. It carries out the reaction ATP + H2O = ADP + phosphate + H(+). Its function is as follows. The heterodimer acts as both an ATP-dependent DNA helicase and an ATP-dependent, dual-direction single-stranded exonuclease. Recognizes the chi site generating a DNA molecule suitable for the initiation of homologous recombination. The AddA nuclease domain is required for chi fragment generation; this subunit has the helicase and 3' -&gt; 5' nuclease activities. The sequence is that of ATP-dependent helicase/nuclease subunit A from Desulfitobacterium hafniense (strain DSM 10664 / DCB-2).